Here is a 138-residue protein sequence, read N- to C-terminus: MRTLWIMAVLLVGVEGSLLEFGRMIKEETGKNPLFSYISYGCYCGWGGQGQPKDATDRCCFVHDCCYGKLWSCSPKTDIYFYYRKNGAIVCARGTWCEKQICECDKAAAICFRENLGTYKAEYESYGKSRCTEKSLKC.

A signal peptide spans 1-16 (MRTLWIMAVLLVGVEG). 7 disulfide bridges follow: Cys-42/Cys-131, Cys-44/Cys-60, Cys-59/Cys-111, Cys-65/Cys-138, Cys-66/Cys-104, Cys-73/Cys-97, and Cys-91/Cys-102. Tyr-43, Gly-45, and Gly-47 together coordinate Ca(2+). His-63 is a catalytic residue. Position 64 (Asp-64) interacts with Ca(2+). The active site involves Asp-105.

As to quaternary structure, monomer. Ca(2+) is required as a cofactor. In terms of tissue distribution, expressed by the venom gland.

It is found in the secreted. It carries out the reaction a 1,2-diacyl-sn-glycero-3-phosphocholine + H2O = a 1-acyl-sn-glycero-3-phosphocholine + a fatty acid + H(+). Functionally, snake venom phospholipase A2 (PLA2) that impairs hemostasis. It weakly inhibits ADP-induced platelet aggregation when tested on platelet rich plasma from human and rabbit blood (15-25% of inhibition at 5-10 ug of enzyme), and dose-dependently inhibits blood coagulation, possibly by inhibiting thrombin activation. Also induces local edema a few hours after injection in the hind foot. Exhibits high hydrolytic activities toward L-dipalmitoyl phosphatidylcholine. PLA2 catalyzes the calcium-dependent hydrolysis of the 2-acyl groups in 3-sn-phosphoglycerides. The protein is Basic phospholipase A2 Tpu-G6D49 of Craspedocephalus puniceus (Flat-nosed pitviper).